Reading from the N-terminus, the 422-residue chain is Serine--tRNA ligase (422 aa).

Thr-231 to Glu-233 contributes to the L-serine binding site. Arg-262 to Glu-264 is an ATP binding site. Residue Glu-285 coordinates L-serine. Glu-349–Ser-352 serves as a coordination point for ATP. Ser-384 contributes to the L-serine binding site.

Belongs to the class-II aminoacyl-tRNA synthetase family. Type-1 seryl-tRNA synthetase subfamily. Homodimer. The tRNA molecule binds across the dimer.

Its subcellular location is the cytoplasm. It catalyses the reaction tRNA(Ser) + L-serine + ATP = L-seryl-tRNA(Ser) + AMP + diphosphate + H(+). It carries out the reaction tRNA(Sec) + L-serine + ATP = L-seryl-tRNA(Sec) + AMP + diphosphate + H(+). It functions in the pathway aminoacyl-tRNA biosynthesis; selenocysteinyl-tRNA(Sec) biosynthesis; L-seryl-tRNA(Sec) from L-serine and tRNA(Sec): step 1/1. Its function is as follows. Catalyzes the attachment of serine to tRNA(Ser). Is also able to aminoacylate tRNA(Sec) with serine, to form the misacylated tRNA L-seryl-tRNA(Sec), which will be further converted into selenocysteinyl-tRNA(Sec). This Mesoplasma florum (strain ATCC 33453 / NBRC 100688 / NCTC 11704 / L1) (Acholeplasma florum) protein is Serine--tRNA ligase.